A 350-amino-acid chain; its full sequence is DNA repair protein rhp55 (350 aa).

ATP is bound at residue 51–58 (GAPGMGKT). The disordered stretch occupies residues 331–350 (QSIPTNSSQRRKRSILECES).

This sequence belongs to the RecA family. RAD55 subfamily.

It localises to the nucleus. Functionally, required for radiation resistance and meiotic viability and acts in recombination and recombinational DNA repair pathways. In Schizosaccharomyces pombe (strain 972 / ATCC 24843) (Fission yeast), this protein is DNA repair protein rhp55 (rhp55).